A 41-amino-acid chain; its full sequence is Large ribosomal subunit protein bL36 (41 aa).

Belongs to the bacterial ribosomal protein bL36 family.

This is Large ribosomal subunit protein bL36 from Zymomonas mobilis subsp. mobilis (strain ATCC 31821 / ZM4 / CP4).